A 369-amino-acid chain; its full sequence is MENSKKTPLFTVYEKHKGKLIDFGGWAMPVQFEGIIPEHEAVRSNAGLFDVSHMGEVEIKGKDALNFVQYLITNDASQMEKNQIIYSFMCYENGGVVDDLLVYKFEEDYFYLVINAGNIEKDYEWMLKQSTAYDVEVNNISNDVSELALQGPKAEKILQKLTETDLSQLQFFYLQRDVTIDGVNCLISRTGYTGEDGFEIYVNPSDAVQLWEKLLEVGQEDGLKPIGLGARDTLRFEAALPLYGHEINRDITPLEAGFGFAVKLKKEVDFLGKKALIEQKEAGLTRKLVGFEMKDRGIPRSDYEVYHQGEKIGFVTTGYFSPTLKRNIGLALIDAKYAELGNEVDILIRKKQVKAELISKTFYKKNYKK.

The protein belongs to the GcvT family. The glycine cleavage system is composed of four proteins: P, T, L and H.

The enzyme catalyses N(6)-[(R)-S(8)-aminomethyldihydrolipoyl]-L-lysyl-[protein] + (6S)-5,6,7,8-tetrahydrofolate = N(6)-[(R)-dihydrolipoyl]-L-lysyl-[protein] + (6R)-5,10-methylene-5,6,7,8-tetrahydrofolate + NH4(+). In terms of biological role, the glycine cleavage system catalyzes the degradation of glycine. The polypeptide is Aminomethyltransferase (Alkaliphilus metalliredigens (strain QYMF)).